The sequence spans 236 residues: Large ribosomal subunit protein uL1 (236 aa).

It belongs to the universal ribosomal protein uL1 family. Part of the 50S ribosomal subunit.

Binds directly to 23S rRNA. The L1 stalk is quite mobile in the ribosome, and is involved in E site tRNA release. In terms of biological role, protein L1 is also a translational repressor protein, it controls the translation of the L11 operon by binding to its mRNA. In Sorangium cellulosum (strain So ce56) (Polyangium cellulosum (strain So ce56)), this protein is Large ribosomal subunit protein uL1.